Here is a 634-residue protein sequence, read N- to C-terminus: Leucine--tRNA ligase subunit alpha (634 aa).

A 'HIGH' region motif is present at residues 43–51 (PSGRIHMGH).

This sequence belongs to the class-I aminoacyl-tRNA synthetase family. As to quaternary structure, seems to consist of an alpha chain and a beta chain.

It is found in the cytoplasm. The catalysed reaction is tRNA(Leu) + L-leucine + ATP = L-leucyl-tRNA(Leu) + AMP + diphosphate. In Aquifex aeolicus (strain VF5), this protein is Leucine--tRNA ligase subunit alpha (leuS).